Here is a 661-residue protein sequence, read N- to C-terminus: Kyphoscoliosis peptidase (661 aa).

The segment covering 28-41 has biased composition (polar residues); it reads GTLSDQQANPSSLL. Disordered regions lie at residues 28–47 and 115–136; these read GTLS…GGGF and QGDK…HAYP. Active-site residues include cysteine 225, histidine 267, and aspartate 282.

Belongs to the transglutaminase-like superfamily. As to quaternary structure, interacts with IGFN1 and FLNC. As to expression, highly expressed in skeletal muscle.

It localises to the cytoplasm. The protein localises to the cytoskeleton. It is found in the myofibril. The protein resides in the sarcomere. Its subcellular location is the z line. Functionally, probable cytoskeleton-associated protease required for normal muscle growth. Involved in function, maturation and stabilization of the neuromuscular junction. May act by cleaving muscle-specific proteins such as FLNC. This chain is Kyphoscoliosis peptidase, found in Homo sapiens (Human).